The primary structure comprises 252 residues: Thiazole synthase (252 aa).

Lys-98 acts as the Schiff-base intermediate with DXP in catalysis. 1-deoxy-D-xylulose 5-phosphate-binding positions include Gly-159, 185–186 (AG), and 207–208 (AT).

Belongs to the ThiG family. As to quaternary structure, homotetramer. Forms heterodimers with either ThiH or ThiS.

Its subcellular location is the cytoplasm. It catalyses the reaction [ThiS sulfur-carrier protein]-C-terminal-Gly-aminoethanethioate + 2-iminoacetate + 1-deoxy-D-xylulose 5-phosphate = [ThiS sulfur-carrier protein]-C-terminal Gly-Gly + 2-[(2R,5Z)-2-carboxy-4-methylthiazol-5(2H)-ylidene]ethyl phosphate + 2 H2O + H(+). It functions in the pathway cofactor biosynthesis; thiamine diphosphate biosynthesis. Catalyzes the rearrangement of 1-deoxy-D-xylulose 5-phosphate (DXP) to produce the thiazole phosphate moiety of thiamine. Sulfur is provided by the thiocarboxylate moiety of the carrier protein ThiS. In vitro, sulfur can be provided by H(2)S. The chain is Thiazole synthase from Mycobacterium avium (strain 104).